We begin with the raw amino-acid sequence, 204 residues long: Tat proofreading chaperone DmsD (204 aa).

Belongs to the TorD/DmsD family. DmsD subfamily.

Its function is as follows. Required for biogenesis/assembly of DMSO reductase, but not for the interaction of the DmsA signal peptide with the Tat system. May be part of a chaperone cascade complex that facilitates a folding-maturation pathway for the substrate protein. This chain is Tat proofreading chaperone DmsD, found in Escherichia coli O157:H7.